The primary structure comprises 461 residues: Cysteine--tRNA ligase (461 aa).

Cys28 contacts Zn(2+). The 'HIGH' region motif lies at 30 to 40; that stretch reads MTVYDYCHLGH. Residues Cys212, His237, and Glu241 each contribute to the Zn(2+) site. Residues 269 to 273 carry the 'KMSKS' region motif; the sequence is KMSKS. Lys272 contacts ATP.

Belongs to the class-I aminoacyl-tRNA synthetase family. In terms of assembly, monomer. It depends on Zn(2+) as a cofactor.

It is found in the cytoplasm. The enzyme catalyses tRNA(Cys) + L-cysteine + ATP = L-cysteinyl-tRNA(Cys) + AMP + diphosphate. The chain is Cysteine--tRNA ligase from Aromatoleum aromaticum (strain DSM 19018 / LMG 30748 / EbN1) (Azoarcus sp. (strain EbN1)).